The chain runs to 181 residues: uncharacterized protein (181 aa).

In terms of domain architecture, N-acetyltransferase spans 1-159 (MTVHHFTFHI…KACWMMQSLT (159 aa)).

The protein belongs to the acetyltransferase family.

This is an uncharacterized protein from Escherichia coli (strain K12).